Reading from the N-terminus, the 154-residue chain is uncharacterized protein (154 aa).

A run of 4 helical transmembrane segments spans residues 39–61 (LLIF…FFAR), 65–87 (LPYI…VSLL), 94–113 (VESL…RVFI), and 128–150 (LLIN…SPFT).

Its subcellular location is the cell membrane. This is an uncharacterized protein from Aquifex aeolicus (strain VF5).